A 942-amino-acid chain; its full sequence is AP-1 complex subunit beta (942 aa).

HEAT repeat units follow at residues 45–82 (KDVS…NHPD), 117–154 (NITE…VNPE), 156–193 (VENQ…VSKK), 273–313 (DVIR…KRPE), 384–421 (RASE…KYPN), and 458–495 (DNAH…KRPK). A disordered region spans residues 590 to 700 (GLRNKEEEDE…NDLSFLGGGG (111 aa)). The span at 596–609 (EEDEEEPDYVDDDN) shows a compositional bias: acidic residues. Low complexity-rich tracts occupy residues 613 to 645 (QQGG…QQQP) and 664 to 677 (NNNN…NNNN). The segment covering 678-693 (MYSPQPQQFNGNSNDL) has biased composition (polar residues).

It belongs to the adaptor complexes large subunit family. In terms of assembly, adaptor protein complex 1 (AP-1) is a heterotetramer composed of two large adaptins (gamma-type subunit and beta-type subunit), a medium adaptin (mu-type subunit) and a small adaptin (sigma-type subunit).

It is found in the golgi apparatus. It localises to the trans-Golgi network. Its subcellular location is the cytoplasmic vesicle. The protein resides in the clathrin-coated vesicle membrane. Subunit of clathrin-associated adaptor protein complex 1 that plays a role in protein sorting in the trans-Golgi network (TGN) and endosomes. The AP complexes mediate the recruitment of clathrin to membranes and the recognition of sorting signals within the cytosolic tails of transmembrane cargo molecules. Also involved in early steps of phagocytosis and macropinocytosis. The chain is AP-1 complex subunit beta (ap1b1) from Dictyostelium discoideum (Social amoeba).